The primary structure comprises 353 residues: Phenol 2-monooxygenase, reductase component DmpP (353 aa).

The 2Fe-2S ferredoxin-type domain maps to 3–93 (YNVTIEPTGE…DLVIEADVDA (91 aa)). C37, C42, C45, and C77 together coordinate [2Fe-2S] cluster. One can recognise an FAD-binding FR-type domain in the interval 102–201 (VEDYRGVVSA…SGPYGQFFVR (100 aa)).

The multicomponent enzyme phenol hydroxylase is formed by DmpL (P1 component), DmpM (P2 component), DmpN (P3 component), DmpO (P4 component) and DmpP (P5 component). FAD is required as a cofactor. [2Fe-2S] cluster serves as cofactor.

The enzyme catalyses phenol + NADH + O2 + H(+) = catechol + NAD(+) + H2O. The protein operates within aromatic compound metabolism; phenol degradation. Its function is as follows. Part of a multicomponent enzyme which catalyzes the degradation of phenol and some of its methylated derivatives. DmpP probably transfers electrons from NADH, via FAD and the iron-sulfur center, to the oxygenase component of the complex. Required for growth on phenol and for in vitro phenol hydroxylase activity. This is Phenol 2-monooxygenase, reductase component DmpP from Pseudomonas sp. (strain CF600).